The following is a 120-amino-acid chain: Large ribosomal subunit protein uL18 (120 aa).

This sequence belongs to the universal ribosomal protein uL18 family. As to quaternary structure, part of the 50S ribosomal subunit; part of the 5S rRNA/L5/L18/L25 subcomplex. Contacts the 5S and 23S rRNAs.

This is one of the proteins that bind and probably mediate the attachment of the 5S RNA into the large ribosomal subunit, where it forms part of the central protuberance. This Chloroflexus aggregans (strain MD-66 / DSM 9485) protein is Large ribosomal subunit protein uL18.